The sequence spans 334 residues: MKEIFLQISNRQDLSQDQVQAVFDRILKNEVSESQIASFLMGLKIKGETSDEITGIVRALKSHATVLPETFTDAMCNCGTGGDQSYSFNISTTACFVLAAGGIRMAKAGNRSISSKSGSADVLEVLGINVAASPEILSKALDEVGLAFIFAQTMHPAMRFIGPARQALGIPTIMNLVGPLANPLDLETQLMGLYRVELQEIVANAIQQLGRKRAVIITGPDNMDEAALYGTNTYTLLEDGHISQHTFTYEDLGMEKVELSDITGGDAKENAEILLSVLRNEASPYLETTVLNVGLGFFANGKAGTIKEGVELARQLIADGSALEKLRKLQEVQV.

Residues glycine 79, 82-83 (GD), serine 87, 89-92 (NIST), 107-115 (KAGNRSISS), and serine 119 contribute to the 5-phospho-alpha-D-ribose 1-diphosphate site. Glycine 79 contributes to the anthranilate binding site. Position 91 (serine 91) interacts with Mg(2+). Asparagine 110 is a binding site for anthranilate. An anthranilate-binding site is contributed by arginine 165. Aspartate 224 and glutamate 225 together coordinate Mg(2+).

Belongs to the anthranilate phosphoribosyltransferase family. In terms of assembly, homodimer. It depends on Mg(2+) as a cofactor.

The enzyme catalyses N-(5-phospho-beta-D-ribosyl)anthranilate + diphosphate = 5-phospho-alpha-D-ribose 1-diphosphate + anthranilate. It participates in amino-acid biosynthesis; L-tryptophan biosynthesis; L-tryptophan from chorismate: step 2/5. In terms of biological role, catalyzes the transfer of the phosphoribosyl group of 5-phosphorylribose-1-pyrophosphate (PRPP) to anthranilate to yield N-(5'-phosphoribosyl)-anthranilate (PRA). In Streptococcus thermophilus (strain ATCC BAA-491 / LMD-9), this protein is Anthranilate phosphoribosyltransferase.